We begin with the raw amino-acid sequence, 2014 residues long: Fatty acid synthase beta subunit pigK (2014 aa).

Positions leucine 144 to isoleucine 515 are acetyltransferase (AT) domain. Catalysis depends on serine 263, which acts as the For acetyltransferase activity. The enoyl reductase (ER) domain stretch occupies residues serine 570–aspartate 815. The dehydratase (DH) domain stretch occupies residues arginine 1126–valine 1606. The region spanning proline 1514–threonine 1627 is the MaoC-like domain. The malonyl/palmitoyl transferase (MT/PT) domain stretch occupies residues phenylalanine 1645–serine 2005. Residue serine 1790 is the For malonyltransferase activity of the active site.

Belongs to the fungal fatty acid synthetase subunit beta family. As to quaternary structure, [Alpha(6)beta(6)] hexamers of two multifunctional subunits (alpha and beta).

It catalyses the reaction acetyl-CoA + n malonyl-CoA + 2n NADPH + 4n H(+) = a long-chain-acyl-CoA + n CoA + n CO2 + 2n NADP(+).. The enzyme catalyses holo-[ACP] + acetyl-CoA = acetyl-[ACP] + CoA. It carries out the reaction holo-[ACP] + malonyl-CoA = malonyl-[ACP] + CoA. The catalysed reaction is a (3R)-hydroxyacyl-[ACP] = a (2E)-enoyl-[ACP] + H2O. It catalyses the reaction a 2,3-saturated acyl-[ACP] + NAD(+) = a (2E)-enoyl-[ACP] + NADH + H(+). The enzyme catalyses (9Z)-octadecenoyl-[ACP] + H2O = (9Z)-octadecenoate + holo-[ACP] + H(+). It participates in secondary metabolite biosynthesis. Its function is as follows. Fatty acid synthase subunit beta; part of the gene cluster that mediates the biosynthesis of azaphilone pigments (MonAzPs), a complex mixture of compounds with a common azaphilone skeleton very widely used as food colorants. PigJ and pigK form the two subunits of a dedicated fungal fatty acid synthase (FAS) that produces the side chain fatty acyl moiety of MonAzPs, a beta-keto fatty acid. The chain length control of the pigJ-pigK FAS is somewhat flexible as MonAzPs features either a beta-ketooctanoic or a beta-ketodecanoic acid moiety. The beta-ketoacyl-ACP probably serves as the substrate for the acetyltransferase pigD that directly transfers the fatty acyl chain to the C-4 alcohol of the pyran ring. The first step of the pathway is performed by the nrPKS pigA that forms the hexaketide precursor from successive condensations of five malonyl-CoA units, with a simple acetyl-CoA starter unit. The role of esterase pigG is not clear, but it may play at most a supplementary role in the formation of the benzaldehyde produced by the pigA nrPKS. This very reactive benzaldehyde is intercepted by the pigC ketoreductase that to provide the first stable enzyme-free MonAzPs intermediate, 6-(4-hydroxy-2-oxopentyl)-3-methyl-2,4-dioxocyclohexane carbaldehyde, also known as M7PKS-1. The FAD-dependent monooxygenase pigN hydroxylates M7PKS-1 at C-4, which triggers the formation of the pyran ring. PigJ, pigK and pigD are involved in the acetylation of the pyran ring. PigJ and pigK form the two subunits of a dedicated fungal FAS that produces the side chain fatty acyl moiety of MonAzPs and pigD transfers the fatty acyl chain to the C-4 alcohol. PigM and pigO are involved in the elimination of the omega-1 alcohol. PigM acts as an O-acetyltransferase that synthesizes the putative O-11 acetyl intermediate whereas pigO eliminates acetic acid to yield an intermediate with a C10(11) double bond. The dehydration of the C-11 alcohol followed by the reduction of the C6(7) double bond by the NAD(P)H-dependent oxidoreductase pigE increases the electrophilicity of the C-5 ketone of the resulting acyl benzopyran. This in turn sets up the C-5 ketone for an intramolecular Knoevenagel aldol condensation with the C-20 enol of the side chain. This condensation affords the characteristic linear tricyclic carbon skeletons of the yellow pigments that serve as the common precursors for the classical yellow pigments monascin and ankaflavin, orange pigments rubopunctatin and monascorubrin, and red pigments ribropunctamine and monascorubramine. The FAD-dependent oxidoreductase pigF is especially invoved in the biosynthesis of orange and red pigments via desaturation of C6(7). The chain is Fatty acid synthase beta subunit pigK from Monascus ruber (Mold).